The following is a 106-amino-acid chain: UPF0060 membrane protein RHE_CH01408 (106 aa).

A run of 4 helical transmembrane segments spans residues Ile4–Leu24, Ala30–Val50, Phe59–Gly79, and Asp86–Ala106.

It belongs to the UPF0060 family.

It is found in the cell inner membrane. The protein is UPF0060 membrane protein RHE_CH01408 of Rhizobium etli (strain ATCC 51251 / DSM 11541 / JCM 21823 / NBRC 15573 / CFN 42).